A 311-amino-acid chain; its full sequence is Ketoisovalerate oxidoreductase subunit VorB (311 aa).

In terms of assembly, heterotetramer of one alpha, one beta, one delta and one gamma chain.

The catalysed reaction is 3-methyl-2-oxobutanoate + 2 oxidized [2Fe-2S]-[ferredoxin] + CoA = 2-methylpropanoyl-CoA + 2 reduced [2Fe-2S]-[ferredoxin] + CO2 + H(+). This is Ketoisovalerate oxidoreductase subunit VorB (vorB) from Pyrococcus abyssi (strain GE5 / Orsay).